A 358-amino-acid chain; its full sequence is 3-isopropylmalate dehydrogenase 2 (358 aa).

74–87 (GPKWDKLPAESRPE) lines the NAD(+) pocket. Substrate contacts are provided by Arg94, Arg104, Arg132, and Asp221. Asp221, Asp245, and Asp249 together coordinate Mg(2+). 279 to 291 (GSAPDIAGQGVAN) contacts NAD(+).

This sequence belongs to the isocitrate and isopropylmalate dehydrogenases family. LeuB type 1 subfamily. As to quaternary structure, homodimer. Requires Mg(2+) as cofactor. It depends on Mn(2+) as a cofactor.

It localises to the cytoplasm. It catalyses the reaction (2R,3S)-3-isopropylmalate + NAD(+) = 4-methyl-2-oxopentanoate + CO2 + NADH. Its pathway is amino-acid biosynthesis; L-leucine biosynthesis; L-leucine from 3-methyl-2-oxobutanoate: step 3/4. Its function is as follows. Catalyzes the oxidation of 3-carboxy-2-hydroxy-4-methylpentanoate (3-isopropylmalate) to 3-carboxy-4-methyl-2-oxopentanoate. The product decarboxylates to 4-methyl-2 oxopentanoate. The protein is 3-isopropylmalate dehydrogenase 2 of Dechloromonas aromatica (strain RCB).